A 532-amino-acid polypeptide reads, in one-letter code: 2,3-bisphosphoglycerate-independent phosphoglycerate mutase (532 aa).

Mn(2+)-binding residues include D15 and S65. Catalysis depends on S65, which acts as the Phosphoserine intermediate. Substrate contacts are provided by residues H126, 156–157 (RD), R188, R194, 258–261 (RPDR), and K331. Positions 398, 402, 439, 440, and 457 each coordinate Mn(2+).

It belongs to the BPG-independent phosphoglycerate mutase family. In terms of assembly, monomer. Requires Mn(2+) as cofactor.

The enzyme catalyses (2R)-2-phosphoglycerate = (2R)-3-phosphoglycerate. The protein operates within carbohydrate degradation; glycolysis; pyruvate from D-glyceraldehyde 3-phosphate: step 3/5. In terms of biological role, catalyzes the interconversion of 2-phosphoglycerate and 3-phosphoglycerate. The chain is 2,3-bisphosphoglycerate-independent phosphoglycerate mutase from Synechocystis sp. (strain ATCC 27184 / PCC 6803 / Kazusa).